We begin with the raw amino-acid sequence, 1147 residues long: Nucleolar protein 6 (1147 aa).

Residues methionine 1–valine 49 are disordered. A compositionally biased stretch (acidic residues) spans alanine 15–aspartate 24.

The protein belongs to the NRAP family. Part of the small subunit (SSU) processome, composed of more than 70 proteins and the RNA chaperone small nucleolar RNA (snoRNA) U3.

The protein localises to the nucleus. Its subcellular location is the nucleolus. The protein resides in the chromosome. In terms of biological role, part of the small subunit (SSU) processome, first precursor of the small eukaryotic ribosomal subunit. During the assembly of the SSU processome in the nucleolus, many ribosome biogenesis factors, an RNA chaperone and ribosomal proteins associate with the nascent pre-rRNA and work in concert to generate RNA folding, modifications, rearrangements and cleavage as well as targeted degradation of pre-ribosomal RNA by the RNA exosome. The protein is Nucleolar protein 6 (nol6) of Xenopus laevis (African clawed frog).